The chain runs to 216 residues: Phosphorylated carbohydrates phosphatase TM_1254 (216 aa).

Asp-7 (nucleophile) is an active-site residue.

Belongs to the HAD-like hydrolase superfamily. Requires Co(2+) as cofactor. It depends on Mg(2+) as a cofactor. Mn(2+) serves as cofactor. Ni(2+) is required as a cofactor.

Functionally, displays high phosphatase activity toward erythrose 4-phosphate, fructose 6-phosphate, 2-deoxyglucose 6-phosphate, and mannose 6-phosphate. May have a role in the intracellular metabolism of many phosphorylated carbohydrates. This Thermotoga maritima (strain ATCC 43589 / DSM 3109 / JCM 10099 / NBRC 100826 / MSB8) protein is Phosphorylated carbohydrates phosphatase TM_1254.